The chain runs to 72 residues: U10-myrmicitoxin-Tb1a (72 aa).

Positions 1 to 26 are cleaved as a signal peptide; sequence MRVSYLSLTLTIVVVIAIIYAPETEA. Residues 27-36 constitute a propeptide that is removed on maturation; it reads KAWADADAEA.

It belongs to the formicidae venom precursor-01 superfamily. As to expression, expressed by the venom gland.

The protein resides in the secreted. Its function is as follows. In vivo, this neurotoxin paralyzes about 40% of blowflies (L.caesar) one hour after intrathoracic injection, when tested at high doses (28 nmol/g). The polypeptide is U10-myrmicitoxin-Tb1a (Tetramorium bicarinatum (Tramp ant)).